The chain runs to 258 residues: Octanoyltransferase (258 aa).

Residues 42–226 enclose the BPL/LPL catalytic domain; the sequence is NLGADTLLLL…AVVAALDGAL (185 aa). Substrate contacts are provided by residues 80-87, 156-158, and 169-171; these read RGGKITWH, AIG, and GFS. Cys-187 (acyl-thioester intermediate) is an active-site residue.

The protein belongs to the LipB family.

The protein resides in the cytoplasm. The enzyme catalyses octanoyl-[ACP] + L-lysyl-[protein] = N(6)-octanoyl-L-lysyl-[protein] + holo-[ACP] + H(+). It participates in protein modification; protein lipoylation via endogenous pathway; protein N(6)-(lipoyl)lysine from octanoyl-[acyl-carrier-protein]: step 1/2. Its function is as follows. Catalyzes the transfer of endogenously produced octanoic acid from octanoyl-acyl-carrier-protein onto the lipoyl domains of lipoate-dependent enzymes. Lipoyl-ACP can also act as a substrate although octanoyl-ACP is likely to be the physiological substrate. This chain is Octanoyltransferase, found in Rhodococcus opacus (strain B4).